The chain runs to 86 residues: Small ribosomal subunit protein uS15 (86 aa).

A compositionally biased stretch (polar residues) spans 1 to 10; sequence MSIDTQSIIE. The disordered stretch occupies residues 1 to 21; the sequence is MSIDTQSIIENNKRSAHDTGS.

It belongs to the universal ribosomal protein uS15 family. As to quaternary structure, part of the 30S ribosomal subunit. Forms a bridge to the 50S subunit in the 70S ribosome, contacting the 23S rRNA.

In terms of biological role, one of the primary rRNA binding proteins, it binds directly to 16S rRNA where it helps nucleate assembly of the platform of the 30S subunit by binding and bridging several RNA helices of the 16S rRNA. Functionally, forms an intersubunit bridge (bridge B4) with the 23S rRNA of the 50S subunit in the ribosome. The protein is Small ribosomal subunit protein uS15 of Xylella fastidiosa (strain 9a5c).